The primary structure comprises 436 residues: Drebrin-like protein (436 aa).

Residues 2–133 (AVNLSRNGPA…EPECIMEKVA (132 aa)) form the ADF-H domain. Threonine 26 is subject to Phosphothreonine. Serine 160 carries the phosphoserine modification. The residue at position 176 (lysine 176) is an N6-acetyllysine. A coiled-coil region spans residues 178–232 (NFWAKAEKEEENRRLEEKRRAEEEKQRLEEERRERELQEAARREQRYQEQHRSAG). Composition is skewed to basic and acidic residues over residues 185 to 229 (KEEE…EQHR) and 264 to 275 (HPREIFKQKERA). The segment at 185–371 (KEEENRRLEE…GSGHIDNYMQ (187 aa)) is disordered. The span at 276-286 (MSTTSVSSSQP) shows a compositional bias: polar residues. A phosphoserine mark is found at serine 277, serine 280, serine 283, and serine 291. An N6-acetyllysine modification is found at lysine 296. Threonine 299 carries the phosphothreonine modification. Serine 311 bears the Phosphoserine mark. Residues tyrosine 340 and tyrosine 350 each carry the phosphotyrosine modification. The region spanning 377–436 (GQGLCARALYDYQAADDTEISFDPENLITGIEVIDEGWWRGYGPDGHFGMFPANYVELIE) is the SH3 domain.

It belongs to the ABP1 family. In terms of assembly, interacts with FGD1, MAP4K1 and PRAM1. Interacts with ANKRD54. Interacts with WASL and WIPF1. Interacts with SHANK2 and SHANK3. Interacts with both COBL and PACSIN1. Interacts with DNM1 and SYN1. As to expression, detected in brain (at protein level). Widely expressed in brain with highest levels in hippocampus and cerebral cortex. Located primarily in dendrites and, in moderate amounts, in cell bodies. Isoform 1 and isoform 3 are the predominant isoforms in brain.

It is found in the cytoplasm. It localises to the cytoskeleton. The protein localises to the cell projection. Its subcellular location is the lamellipodium. The protein resides in the ruffle. It is found in the cell cortex. It localises to the cytosol. The protein localises to the cell membrane. Its subcellular location is the synapse. The protein resides in the perikaryon. It is found in the neuron projection. It localises to the dendrite. The protein localises to the postsynaptic density. Its subcellular location is the golgi apparatus membrane. The protein resides in the cytoplasmic vesicle. It is found in the clathrin-coated vesicle membrane. It localises to the podosome. The protein localises to the early endosome. Its function is as follows. Adapter protein that binds F-actin and DNM1, and thereby plays a role in receptor-mediated endocytosis. Required for the formation of organized podosome rosettes. May act as a common effector of antigen receptor-signaling pathways in leukocytes. Acts as a key component of the immunological synapse that regulates T-cell activation by bridging TCRs and the actin cytoskeleton to gene activation and endocytic processes. Plays a role in the reorganization of the actin cytoskeleton, formation of cell projections, such as neurites, in neuron morphogenesis and synapse formation via its interaction with WASL and COBL. Does not bind G-actin and promote actin polymerization by itself. In Rattus norvegicus (Rat), this protein is Drebrin-like protein.